Here is a 282-residue protein sequence, read N- to C-terminus: 4-hydroxy-3-methylbut-2-enyl diphosphate reductase (282 aa).

[4Fe-4S] cluster is bound at residue C12. H40 and H72 together coordinate (2E)-4-hydroxy-3-methylbut-2-enyl diphosphate. Dimethylallyl diphosphate is bound by residues H40 and H72. Isopentenyl diphosphate is bound by residues H40 and H72. Residue C94 participates in [4Fe-4S] cluster binding. H122 provides a ligand contact to (2E)-4-hydroxy-3-methylbut-2-enyl diphosphate. H122 is a dimethylallyl diphosphate binding site. H122 provides a ligand contact to isopentenyl diphosphate. The active-site Proton donor is the E124. T160 is a binding site for (2E)-4-hydroxy-3-methylbut-2-enyl diphosphate. C188 contacts [4Fe-4S] cluster. 3 residues coordinate (2E)-4-hydroxy-3-methylbut-2-enyl diphosphate: S216, N218, and S260. Residues S216, N218, and S260 each contribute to the dimethylallyl diphosphate site. Isopentenyl diphosphate is bound by residues S216, N218, and S260.

The protein belongs to the IspH family. Requires [4Fe-4S] cluster as cofactor.

The enzyme catalyses isopentenyl diphosphate + 2 oxidized [2Fe-2S]-[ferredoxin] + H2O = (2E)-4-hydroxy-3-methylbut-2-enyl diphosphate + 2 reduced [2Fe-2S]-[ferredoxin] + 2 H(+). It catalyses the reaction dimethylallyl diphosphate + 2 oxidized [2Fe-2S]-[ferredoxin] + H2O = (2E)-4-hydroxy-3-methylbut-2-enyl diphosphate + 2 reduced [2Fe-2S]-[ferredoxin] + 2 H(+). The protein operates within isoprenoid biosynthesis; dimethylallyl diphosphate biosynthesis; dimethylallyl diphosphate from (2E)-4-hydroxy-3-methylbutenyl diphosphate: step 1/1. It participates in isoprenoid biosynthesis; isopentenyl diphosphate biosynthesis via DXP pathway; isopentenyl diphosphate from 1-deoxy-D-xylulose 5-phosphate: step 6/6. Functionally, catalyzes the conversion of 1-hydroxy-2-methyl-2-(E)-butenyl 4-diphosphate (HMBPP) into a mixture of isopentenyl diphosphate (IPP) and dimethylallyl diphosphate (DMAPP). Acts in the terminal step of the DOXP/MEP pathway for isoprenoid precursor biosynthesis. The polypeptide is 4-hydroxy-3-methylbut-2-enyl diphosphate reductase (Geobacter metallireducens (strain ATCC 53774 / DSM 7210 / GS-15)).